The chain runs to 541 residues: Chaperonin GroEL 2 (541 aa).

ATP contacts are provided by residues 29–32 (TLGP), 86–90 (DGTTT), G413, 478–480 (NAA), and D494.

The protein belongs to the chaperonin (HSP60) family. Forms a cylinder of 14 subunits composed of two heptameric rings stacked back-to-back. Interacts with the co-chaperonin GroES.

It is found in the cytoplasm. The catalysed reaction is ATP + H2O + a folded polypeptide = ADP + phosphate + an unfolded polypeptide.. Its function is as follows. Together with its co-chaperonin GroES, plays an essential role in assisting protein folding. The GroEL-GroES system forms a nano-cage that allows encapsulation of the non-native substrate proteins and provides a physical environment optimized to promote and accelerate protein folding. The polypeptide is Chaperonin GroEL 2 (Corynebacterium jeikeium (strain K411)).